Consider the following 413-residue polypeptide: Gamma-glutamyl phosphate reductase (413 aa).

It belongs to the gamma-glutamyl phosphate reductase family.

It localises to the cytoplasm. It carries out the reaction L-glutamate 5-semialdehyde + phosphate + NADP(+) = L-glutamyl 5-phosphate + NADPH + H(+). It participates in amino-acid biosynthesis; L-proline biosynthesis; L-glutamate 5-semialdehyde from L-glutamate: step 2/2. Its function is as follows. Catalyzes the NADPH-dependent reduction of L-glutamate 5-phosphate into L-glutamate 5-semialdehyde and phosphate. The product spontaneously undergoes cyclization to form 1-pyrroline-5-carboxylate. This is Gamma-glutamyl phosphate reductase from Alkaliphilus oremlandii (strain OhILAs) (Clostridium oremlandii (strain OhILAs)).